Consider the following 32-residue polypeptide: Zinc metalloproteinase/disintegrin-like CdtV1 (32 aa).

2 disulfide bridges follow: cysteine 5–cysteine 14 and cysteine 7–cysteine 15.

The protein belongs to the venom metalloproteinase (M12B) family. P-II subfamily. P-IIa sub-subfamily. Monomer. In terms of tissue distribution, expressed by the venom gland.

It is found in the secreted. Snake venom metalloproteinase that impairs hemostasis in the envenomed animal. This is Zinc metalloproteinase/disintegrin-like CdtV1 from Crotalus durissus terrificus (South American rattlesnake).